Reading from the N-terminus, the 75-residue chain is Sec-independent protein translocase protein TatA (75 aa).

A helical membrane pass occupies residues 1–21 (MGSFSIWHWLIVLVIVVLVFG). Composition is skewed to basic and acidic residues over residues 43–54 (MRDSEKSGEDVQ) and 66–75 (ATDKSHTVSH). The interval 43–75 (MRDSEKSGEDVQQKIGGDTLDAQATDKSHTVSH) is disordered.

The protein belongs to the TatA/E family. As to quaternary structure, the Tat system comprises two distinct complexes: a TatABC complex, containing multiple copies of TatA, TatB and TatC subunits, and a separate TatA complex, containing only TatA subunits. Substrates initially bind to the TatABC complex, which probably triggers association of the separate TatA complex to form the active translocon.

It localises to the cell inner membrane. Part of the twin-arginine translocation (Tat) system that transports large folded proteins containing a characteristic twin-arginine motif in their signal peptide across membranes. TatA could form the protein-conducting channel of the Tat system. This is Sec-independent protein translocase protein TatA from Aromatoleum aromaticum (strain DSM 19018 / LMG 30748 / EbN1) (Azoarcus sp. (strain EbN1)).